Here is a 206-residue protein sequence, read N- to C-terminus: MTDTAASTSQPALVRNELNLVWLDMEMTGLDPDNDRIIEIAVVVTNSTLDIAVEGPVFAIHQSDETLAKMDDWNKSTHGRSGLIDRVRASTVTEAEAAEQLQAFLAQYVSPGKSPMCGNSICQDRRFMARWMPEFERFFHYRNLDVSTLKELCRRWQPAIYKGFQKRAMHTALADIHESIDELKYYREHFLIPAASASAGESAPAA.

An Exonuclease domain is found at 20 to 183 (LVWLDMEMTG…ADIHESIDEL (164 aa)). Tyr-141 is an active-site residue.

It belongs to the oligoribonuclease family.

It is found in the cytoplasm. In terms of biological role, 3'-to-5' exoribonuclease specific for small oligoribonucleotides. In Burkholderia lata (strain ATCC 17760 / DSM 23089 / LMG 22485 / NCIMB 9086 / R18194 / 383), this protein is Oligoribonuclease.